A 600-amino-acid chain; its full sequence is Methionine--tRNA ligase (600 aa).

Residues 11–21 (PYANGPRHIGH) carry the 'HIGH' region motif. Zn(2+) contacts are provided by Cys143, Cys146, Cys156, and Cys159. Residues 350–354 (QFSSS) carry the 'KMSKS' region motif. Position 353 (Ser353) interacts with ATP.

The protein belongs to the class-I aminoacyl-tRNA synthetase family. MetG type 1 subfamily. In terms of assembly, monomer. It depends on Zn(2+) as a cofactor.

The protein resides in the cytoplasm. The enzyme catalyses tRNA(Met) + L-methionine + ATP = L-methionyl-tRNA(Met) + AMP + diphosphate. Its function is as follows. Is required not only for elongation of protein synthesis but also for the initiation of all mRNA translation through initiator tRNA(fMet) aminoacylation. The protein is Methionine--tRNA ligase of Kineococcus radiotolerans (strain ATCC BAA-149 / DSM 14245 / SRS30216).